The primary structure comprises 655 residues: p-hydroxybenzoic acid efflux pump subunit AaeB (655 aa).

10 helical membrane-spanning segments follow: residues 13–33 (FAVK…HFQL), 38–58 (WAVL…GGEP), 69–89 (LRII…IAMI), 93–113 (LLMI…SSLV), 121–141 (WGLA…EPLL), 152–172 (EIVV…PRSI), 370–390 (LFWL…IAVV), 407–427 (FIYG…VIIP), 431–451 (QSML…GIEV), and 481–501 (LFLD…TVIL).

This sequence belongs to the aromatic acid exporter ArAE (TC 2.A.85) family.

It is found in the cell inner membrane. Functionally, forms an efflux pump with AaeA. Could function as a metabolic relief valve, allowing to eliminate certain compounds when they accumulate to high levels in the cell. This Escherichia fergusonii (strain ATCC 35469 / DSM 13698 / CCUG 18766 / IAM 14443 / JCM 21226 / LMG 7866 / NBRC 102419 / NCTC 12128 / CDC 0568-73) protein is p-hydroxybenzoic acid efflux pump subunit AaeB.